A 591-amino-acid chain; its full sequence is V-type ATP synthase alpha chain (591 aa).

232–239 (GPFGAGKT) contacts ATP.

The protein belongs to the ATPase alpha/beta chains family.

It catalyses the reaction ATP + H2O + 4 H(+)(in) = ADP + phosphate + 5 H(+)(out). Produces ATP from ADP in the presence of a proton gradient across the membrane. The V-type alpha chain is a catalytic subunit. This chain is V-type ATP synthase alpha chain, found in Clostridium perfringens (strain ATCC 13124 / DSM 756 / JCM 1290 / NCIMB 6125 / NCTC 8237 / Type A).